Here is a 342-residue protein sequence, read N- to C-terminus: Ribosomal RNA small subunit methyltransferase H (342 aa).

S-adenosyl-L-methionine is bound by residues 42 to 44 (GGH), Asp61, Phe88, Asp119, and Gln126.

This sequence belongs to the methyltransferase superfamily. RsmH family.

It is found in the cytoplasm. The catalysed reaction is cytidine(1402) in 16S rRNA + S-adenosyl-L-methionine = N(4)-methylcytidine(1402) in 16S rRNA + S-adenosyl-L-homocysteine + H(+). Functionally, specifically methylates the N4 position of cytidine in position 1402 (C1402) of 16S rRNA. The sequence is that of Ribosomal RNA small subunit methyltransferase H from Corynebacterium jeikeium (strain K411).